A 244-amino-acid chain; its full sequence is Uridylate kinase (244 aa).

17 to 20 (KLSG) lines the ATP pocket. A UMP-binding site is contributed by G59. Residues G60 and R64 each contribute to the ATP site. Residues D79 and 140–147 (TGNPFFTT) each bind UMP. Positions 167, 173, and 176 each coordinate ATP.

Belongs to the UMP kinase family. In terms of assembly, homohexamer.

It is found in the cytoplasm. It carries out the reaction UMP + ATP = UDP + ADP. The protein operates within pyrimidine metabolism; CTP biosynthesis via de novo pathway; UDP from UMP (UMPK route): step 1/1. Its activity is regulated as follows. Inhibited by UTP. Its function is as follows. Catalyzes the reversible phosphorylation of UMP to UDP. The chain is Uridylate kinase from Hahella chejuensis (strain KCTC 2396).